The following is a 182-amino-acid chain: Isopentenyl-diphosphate Delta-isomerase (182 aa).

Mn(2+)-binding residues include His25 and His32. The region spanning 30-164 is the Nudix hydrolase domain; that stretch reads LLHLAFSSWL…PWAFSPWMVM (135 aa). The active site involves Cys67. A Mn(2+)-binding site is contributed by His69. Glu87 is a Mg(2+) binding site. Mn(2+)-binding residues include Glu114 and Glu116. Residue Glu116 is part of the active site.

The protein belongs to the IPP isomerase type 1 family. Homodimer. Mg(2+) serves as cofactor. The cofactor is Mn(2+).

The protein resides in the cytoplasm. It catalyses the reaction isopentenyl diphosphate = dimethylallyl diphosphate. It functions in the pathway isoprenoid biosynthesis; dimethylallyl diphosphate biosynthesis; dimethylallyl diphosphate from isopentenyl diphosphate: step 1/1. Functionally, catalyzes the 1,3-allylic rearrangement of the homoallylic substrate isopentenyl (IPP) to its highly electrophilic allylic isomer, dimethylallyl diphosphate (DMAPP). The sequence is that of Isopentenyl-diphosphate Delta-isomerase from Shigella boydii serotype 18 (strain CDC 3083-94 / BS512).